The chain runs to 1203 residues: Plasma membrane calcium-transporting ATPase 4 (1203 aa).

At 1 to 92 the chain is on the cytoplasmic side; it reads MTNPSGHNLP…NMIPPKKPKT (92 aa). The residue at position 13 (S13) is a Phosphoserine. Residues 93–113 form a helical membrane-spanning segment; it reads FLELVWEALQDVTLIILEIAA. The Extracellular portion of the chain corresponds to 114 to 150; that stretch reads IISLVLSFYRPPGGENEICGHIVSNPEEDEEGETGWI. Residues 151–171 form a helical membrane-spanning segment; it reads EGAAILASVIIVVFVTAFNDW. At 172 to 356 the chain is on the cytoplasmic side; it reads SKEKQFRGLQ…KEKSVLQGKL (185 aa). The interval 294–319 is disordered; sequence DDEKKKKGKKQGVSENRNKAKTQDGV. 2 positions are modified to phosphoserine: S328 and S334. The segment at 330 to 349 is disordered; that stretch reads EGLDSEEKEKKASKGPKKEK. The segment covering 334-349 has biased composition (basic and acidic residues); it reads SEEKEKKASKGPKKEK. The chain crosses the membrane as a helical span at residues 357-376; sequence TRLAVQIGKAGLIMSILTVL. The Extracellular portion of the chain corresponds to 377–409; sequence ILILYFVVDNFVIQRRAWLPECTPVYIQYFVKF. Residues 410-427 form a helical membrane-spanning segment; it reads FIIGVTVLVVAVPEGLPL. The Cytoplasmic segment spans residues 428–840; it reads AVTISLAYSV…MWGRNVYDSI (413 aa). Residue D465 is the 4-aspartylphosphate intermediate of the active site. The Mg(2+) site is built by D785 and D789. Residues 841 to 860 form a helical membrane-spanning segment; that stretch reads SKFLQFQLTVNVVAVIVAFS. Over 861–870 the chain is Extracellular; that stretch reads GACITQDSPL. Residues 871–891 form a helical membrane-spanning segment; it reads KAVQMLWVNLIMDTFASLALA. The Cytoplasmic portion of the chain corresponds to 892-911; that stretch reads TEPPTDSLLRRRPYGRNKPL. Residues 912–934 form a helical membrane-spanning segment; that stretch reads ISRTMMKNILGHAVYQLGIVFLL. Residues 935–952 are Extracellular-facing; that stretch reads VFAGDKLFDIDSGRKAPL. The helical transmembrane segment at 953-974 threads the bilayer; sequence NSPPSQHYTIVFNTFVLMQLFN. The Cytoplasmic portion of the chain corresponds to 975–993; sequence EINSRKIHGEKNVFAGVYR. Residues 994–1015 form a helical membrane-spanning segment; it reads NIIFCSVVLGTFFCQILIVEVG. Residues 1016 to 1025 lie on the Extracellular side of the membrane; it reads GKPFSCTNLT. The chain crosses the membrane as a helical span at residues 1026–1047; the sequence is MEQWMWCLFIGIGELLWGQVIS. Residues 1048 to 1203 are Cytoplasmic-facing; sequence AIPTKSLKFL…SPLQSQETPV (156 aa). Residues S1064 and S1070 each carry the phosphoserine modification. The calmodulin-binding subdomain A stretch occupies residues 1086-1103; that stretch reads LRRGQILWVRGLNRIQTQ. Phosphothreonine; by PKC is present on T1102. Q1103 is subject to Phosphoserine. A calmodulin-binding subdomain B region spans residues 1104-1113; sequence IRVVKVFHSF. Phosphoserine occurs at positions 1114, 1115, 1126, and 1144.

It belongs to the cation transport ATPase (P-type) (TC 3.A.3) family. Type IIB subfamily. Interacts with PDZD11. Interacts with SLC35G1 and STIM1. Interacts with calmodulin. In terms of tissue distribution, ubiquitously expressed. Not detected in liver. The highest levels are found in uterus and stomach. Isoform XA is found in uterus, brain, stomach, small intestine, colon and pancreas. Isoform XB is found in uterus, skeletal muscle, lung, kidney, spleen, stomach, small intestine and pancreas. Isoform ZA is found in testis and isoform ZB is found in testis and heart.

The protein localises to the cell membrane. It localises to the cell projection. It is found in the cilium. Its subcellular location is the flagellum membrane. The catalysed reaction is Ca(2+)(in) + ATP + H2O = Ca(2+)(out) + ADP + phosphate + H(+). With respect to regulation, activated by calcium/calmodulin. In terms of biological role, calcium/calmodulin-regulated and magnesium-dependent enzyme that catalyzes the hydrolysis of ATP coupled with the transport of calcium out of the cell. By regulating sperm cell calcium homeostasis, may play a role in sperm motility. This Rattus norvegicus (Rat) protein is Plasma membrane calcium-transporting ATPase 4.